The chain runs to 478 residues: Cysteine--tRNA ligase (478 aa).

C29 serves as a coordination point for Zn(2+). Residues 31 to 41 carry the 'HIGH' region motif; the sequence is VTVYDYCHLGH. C213, H238, and E242 together coordinate Zn(2+). Residues 270 to 274 carry the 'KMSKS' region motif; that stretch reads KMSKS. An ATP-binding site is contributed by K273.

This sequence belongs to the class-I aminoacyl-tRNA synthetase family. Monomer. Zn(2+) serves as cofactor.

Its subcellular location is the cytoplasm. It catalyses the reaction tRNA(Cys) + L-cysteine + ATP = L-cysteinyl-tRNA(Cys) + AMP + diphosphate. This chain is Cysteine--tRNA ligase, found in Synechococcus sp. (strain ATCC 27144 / PCC 6301 / SAUG 1402/1) (Anacystis nidulans).